Here is a 258-residue protein sequence, read N- to C-terminus: UPF0246 protein YaaA (258 aa).

It belongs to the UPF0246 family.

This is UPF0246 protein YaaA from Escherichia coli (strain UTI89 / UPEC).